The chain runs to 230 residues: Agamous-like MADS-box protein AGL11 (230 aa).

The region spanning 3–57 is the MADS-box domain; it reads RGKIEIKRIENSTNRQVTFCKRRNGLLKKAYELSVLCDAEVALIVFSTRGRLYEY. The region spanning 87–177 is the K-box domain; that stretch reads AAYYQQESAK…RTKVAEVERY (91 aa). The tract at residues 211 to 230 is disordered; that stretch reads SGSGNGGSYSDPDKKILHLG. Basic and acidic residues predominate over residues 221–230; sequence DPDKKILHLG.

As to quaternary structure, interacts with AGL15 and AGL16.

The protein resides in the nucleus. Its function is as follows. Probable transcription factor. Is required, together with TT16/AGL32 for the maternal control of endothelium formation, which is essential for female gametophyte development and fertilization, and seed formation. This chain is Agamous-like MADS-box protein AGL11 (AGL11), found in Arabidopsis thaliana (Mouse-ear cress).